The sequence spans 381 residues: Flagellar P-ring protein (381 aa).

An N-terminal signal peptide occupies residues 1–33; sequence MQFFNTLHPTRPHWLLAALCLIASLLGAGTAQA.

This sequence belongs to the FlgI family. In terms of assembly, the basal body constitutes a major portion of the flagellar organelle and consists of four rings (L,P,S, and M) mounted on a central rod.

The protein localises to the periplasm. The protein resides in the bacterial flagellum basal body. Assembles around the rod to form the L-ring and probably protects the motor/basal body from shearing forces during rotation. In Albidiferax ferrireducens (strain ATCC BAA-621 / DSM 15236 / T118) (Rhodoferax ferrireducens), this protein is Flagellar P-ring protein.